We begin with the raw amino-acid sequence, 303 residues long: N-acetyl-D-glucosamine kinase (303 aa).

Residues 4–11 (GFDIGGTK) and 133–140 (GVGGGLIF) each bind ATP. The Zn(2+) site is built by histidine 157, cysteine 177, cysteine 179, and cysteine 184.

Belongs to the ROK (NagC/XylR) family. NagK subfamily.

It catalyses the reaction N-acetyl-D-glucosamine + ATP = N-acetyl-D-glucosamine 6-phosphate + ADP + H(+). Its pathway is cell wall biogenesis; peptidoglycan recycling. Catalyzes the phosphorylation of N-acetyl-D-glucosamine (GlcNAc) derived from cell-wall degradation, yielding GlcNAc-6-P. The protein is N-acetyl-D-glucosamine kinase of Shigella boydii serotype 4 (strain Sb227).